The following is a 463-amino-acid chain: A-type ATP synthase subunit B (463 aa).

The protein belongs to the ATPase alpha/beta chains family. In terms of assembly, has multiple subunits with at least A(3), B(3), C, D, E, F, H, I and proteolipid K(x).

It localises to the cell membrane. Its function is as follows. Component of the A-type ATP synthase that produces ATP from ADP in the presence of a proton gradient across the membrane. The B chain is a regulatory subunit. The chain is A-type ATP synthase subunit B from Saccharolobus islandicus (strain Y.N.15.51 / Yellowstone #2) (Sulfolobus islandicus).